We begin with the raw amino-acid sequence, 360 residues long: Mannan endo-1,4-beta-mannosidase (360 aa).

A signal peptide spans M1–A24. A GH26 domain is found at Q36 to G347. H129 provides a ligand contact to substrate. The active-site Proton donor is E191. Substrate contacts are provided by W196 and Y266. The active-site Nucleophile is E290.

Belongs to the glycosyl hydrolase 26 family. As to quaternary structure, homodimer.

It localises to the secreted. The catalysed reaction is Random hydrolysis of (1-&gt;4)-beta-D-mannosidic linkages in mannans, galactomannans and glucomannans.. Its function is as follows. Involved in the degradation of glucomannan. Catalyzes the endo hydrolysis of beta-1,4-linked mannan, galactomannan and glucomannan. The chain is Mannan endo-1,4-beta-mannosidase from Bacillus subtilis.